A 274-amino-acid chain; its full sequence is Cytochrome b-c1 complex subunit Rieske, mitochondrial (274 aa).

Over 79-103 (SHTDVKVPDFYDYRRLEVLDSTKSS) the chain is Mitochondrial matrix. A helical transmembrane segment spans residues 104–140 (RESSEARKGFSYLVTAVTTVGVAYAAKNAVTQFISSM). The Mitochondrial intermembrane portion of the chain corresponds to 141–274 (SASADVLAMA…FTSDDMVVVG (134 aa)). The Rieske domain maps to 187-272 (EAAVELSQLR…YEFTSDDMVV (86 aa)). Residues Cys-217, His-219, Cys-236, His-239, and Ser-241 each coordinate [2Fe-2S] cluster. Cys-222 and Cys-238 form a disulfide bridge.

It belongs to the Rieske iron-sulfur protein family. As to quaternary structure, component of the ubiquinol-cytochrome c oxidoreductase (cytochrome b-c1 complex, complex III, CIII), a multisubunit enzyme composed of 11 subunits. The complex is composed of 3 respiratory subunits cytochrome b, cytochrome c1 and Rieske protein UQCRFS1, 2 core protein subunits UQCRC1/QCR1 and UQCRC2/QCR2, and 6 low-molecular weight protein subunits UQCRH/QCR6, UQCRB/QCR7, UQCRQ/QCR8, UQCR10/QCR9, UQCR11/QCR10 and subunit 9, the cleavage product of Rieske protein UQCRFS1. The complex exists as an obligatory dimer and forms supercomplexes (SCs) in the inner mitochondrial membrane with NADH-ubiquinone oxidoreductase (complex I, CI) and cytochrome c oxidase (complex IV, CIV), resulting in different assemblies (supercomplex SCI(1)III(2)IV(1) and megacomplex MCI(2)III(2)IV(2)). Incorporation of the Rieske protein UQCRFS1 is the penultimate step in complex III assembly. Interacts with TTC19, which is involved in the clearance of UQCRFS1 fragments. Component of the ubiquinol-cytochrome c oxidoreductase (cytochrome b-c1 complex, complex III, CIII). Subunit 9 corresponds to the mitochondrial targeting sequence (MTS) of Rieske protein UQCRFS1. It is retained after processing and incorporated inside complex III, where it remains bound to the complex and localizes between the 2 core subunits UQCRC1/QCR1 and UQCRC2/QCR2. [2Fe-2S] cluster is required as a cofactor. Post-translationally, proteolytic processing is necessary for the correct insertion of UQCRFS1 in the complex III dimer. Several fragments are generated during UQCRFS1 insertion, most probably due to the endogenous matrix-processing peptidase (MPP) activity of the 2 core protein subunits UQCRC1/QCR1 and UQCRC2/QCR2, which are homologous to the 2 mitochondrial-processing peptidase (MPP) subunits beta-MPP and alpha-MPP respectively. The action of the protease is also necessary for the clearance of the UQCRFS1 fragments.

Its subcellular location is the mitochondrion inner membrane. It catalyses the reaction a quinol + 2 Fe(III)-[cytochrome c](out) = a quinone + 2 Fe(II)-[cytochrome c](out) + 2 H(+)(out). Its function is as follows. Component of the ubiquinol-cytochrome c oxidoreductase, a multisubunit transmembrane complex that is part of the mitochondrial electron transport chain which drives oxidative phosphorylation. The respiratory chain contains 3 multisubunit complexes succinate dehydrogenase (complex II, CII), ubiquinol-cytochrome c oxidoreductase (cytochrome b-c1 complex, complex III, CIII) and cytochrome c oxidase (complex IV, CIV), that cooperate to transfer electrons derived from NADH and succinate to molecular oxygen, creating an electrochemical gradient over the inner membrane that drives transmembrane transport and the ATP synthase. The cytochrome b-c1 complex catalyzes electron transfer from ubiquinol to cytochrome c, linking this redox reaction to translocation of protons across the mitochondrial inner membrane, with protons being carried across the membrane as hydrogens on the quinol. In the process called Q cycle, 2 protons are consumed from the matrix, 4 protons are released into the intermembrane space and 2 electrons are passed to cytochrome c. The Rieske protein is a catalytic core subunit containing a [2Fe-2S] iron-sulfur cluster. It cycles between 2 conformational states during catalysis to transfer electrons from the quinol bound in the Q(0) site in cytochrome b to cytochrome c1. Incorporation of UQCRFS1 is the penultimate step in complex III assembly. In terms of biological role, component of the ubiquinol-cytochrome c oxidoreductase (cytochrome b-c1 complex, complex III, CIII). UQCRFS1 undergoes proteolytic processing once it is incorporated in the complex III dimer. One of the fragments, called subunit 9, corresponds to its mitochondrial targeting sequence (MTS). The proteolytic processing is necessary for the correct insertion of UQCRFS1 in the complex III dimer, but the persistence of UQCRFS1-derived fragments may prevent newly imported UQCRFS1 to be processed and assembled into complex III and is detrimental for the complex III structure and function. This Theropithecus gelada (Gelada baboon) protein is Cytochrome b-c1 complex subunit Rieske, mitochondrial (UQCRFS1).